Consider the following 394-residue polypeptide: 1-deoxy-D-xylulose 5-phosphate reductoisomerase (394 aa).

NADPH is bound by residues T14, G15, S16, I17, G40, and N128. A 1-deoxy-D-xylulose 5-phosphate-binding site is contributed by K129. Residue E130 participates in NADPH binding. Mn(2+) is bound at residue D154. Residues S155, E156, S180, and H203 each coordinate 1-deoxy-D-xylulose 5-phosphate. Position 156 (E156) interacts with Mn(2+). An NADPH-binding site is contributed by G209. The 1-deoxy-D-xylulose 5-phosphate site is built by S216, N221, K222, and E225. E225 serves as a coordination point for Mn(2+).

This sequence belongs to the DXR family. It depends on Mg(2+) as a cofactor. Requires Mn(2+) as cofactor.

The enzyme catalyses 2-C-methyl-D-erythritol 4-phosphate + NADP(+) = 1-deoxy-D-xylulose 5-phosphate + NADPH + H(+). It functions in the pathway isoprenoid biosynthesis; isopentenyl diphosphate biosynthesis via DXP pathway; isopentenyl diphosphate from 1-deoxy-D-xylulose 5-phosphate: step 1/6. Catalyzes the NADPH-dependent rearrangement and reduction of 1-deoxy-D-xylulose-5-phosphate (DXP) to 2-C-methyl-D-erythritol 4-phosphate (MEP). The sequence is that of 1-deoxy-D-xylulose 5-phosphate reductoisomerase from Xylella fastidiosa (strain M12).